The chain runs to 184 residues: Ribosome-recycling factor (184 aa).

The disordered stretch occupies residues 137–158 (DSIKAKQKDGIPEDEAKRGQDE).

It belongs to the RRF family.

It localises to the cytoplasm. Its function is as follows. Responsible for the release of ribosomes from messenger RNA at the termination of protein biosynthesis. May increase the efficiency of translation by recycling ribosomes from one round of translation to another. In Desulforamulus reducens (strain ATCC BAA-1160 / DSM 100696 / MI-1) (Desulfotomaculum reducens), this protein is Ribosome-recycling factor.